A 1485-amino-acid chain; its full sequence is MKPRAECCSPKFWLVLAVLAVSGSRARSQKSPPSIGIAVILVGTSDEVAIKDAHEKDDFHHLSVVPRVELVAMNETDPKSIITRICDLMSDRKIQGVVFADDTDQEAIAQILDFISAQTLTPILGIHGGSSMIMADKDESSMFFQFGPSIEQQASVMLNIMEEYDWYIFSIVTTYFPGYQDFVNKIRSTIENSFVGWELEEVLLLDMSLDDGDSKIQNQLKKLQSPIILLYCTKEEATYIFEVANSVGLTGYGYTWIVPSLVAGDTDTVPSEFPTGLISVSYDEWDYGLPARVRDGIAIITTAASDMLSEHSFIPEPKSSCYNTHEKRIYQSNMLNRYLINVTFEGRNLSFSEDGYQMHPKLVIILLNKERKWERVGKWKDKSLQMKYYVWPRMCPETEEQEDDHLSIVTLEEAPFVIVESVDPLSGTCMRNTVPCQKRIVSENKTDEEPGYIKKCCKGFCIDILKKISKSVKFTYDLYLVTNGKHGKKINGTWNGMIGEVVMKRAYMAVGSLTINEERSEVVDFSVPFIETGISVMVSRSNGTVSPSAFLEPFSADVWVMMFVMLLIVSAVAVFVFEYFSPVGYNRCLADGREPGGPSFTIGKAIWLLWGLVFNNSVPVQNPKGTTSKIMVSVWAFFAVIFLASYTANLAAFMIQEEYVDQVSGLSDKKFQRPNDFSPPFRFGTVPNGSTERNIRNNYAEMHAYMGKFNQRGVDDALLSLKTGKLDAFIYDAAVLNYMAGRDEGCKLVTIGSGKVFASTGYGIAIQKDSGWKRQVDLAILQLFGDGEMEELEALWLTGICHNEKNEVMSSQLDIDNMAGVFYMLGAAMALSLITFICEHLFYWQFRHCFMGVCSGKPGMVFSISRGIYSCIHGVAIEERQSVMNSPTATMNNTHSNILRLLRTAKNMANLSGVNGSPQSALDFIRRESSVYDISEHRRSFTHSDCKSYNNPPCEENLFSDYISEVERTFGNLQLKDSNVYQDHYHHHHRPHSIGSASSIDGLYDCDNPPFTTQPRSISKKPLDLGLPSSKHSQLSDLYGKFSFKSDRYSGHDDLIRSDVSDISTHTVTYGNIEGNAAKRRKQQYKDSLKKRPASAKSRREFDEIELAYRRRPPRSPDHKRYFRDKEGLRDFYLDQFRTKENSPHWEHVDLTDIYKEQSDDFKRDSVSGGGPCTNRSHLKHGAGDKHGVVSGVPAPWEKNLSNVDWEDRSGGNFCRSCPSKLHNYSTAVTGQNSGRQACIRCEACKKAGNLYDISEDNSLQELDQPAAPVAVPSNAPSTKYPQSPTNSKAQKKTRNKLRRQHSYDTFVDLQKEEAALAPRSVSLKDKGRFLDGSPYAHMFETPAGESTFANHESSVAAAGHRHHNNPGGGGYMLSKSLYPDRVTQNPFIPTFGDDQCLLHGSKSYFFRQPTVAGAPKARPDFRALVTNKPVVSALHGAVPGRFQKDICIGNQSNPCVPNNKNPRAFNGSSNGHVYEKLSSIESDV.

Residues 1 to 26 form the signal peptide; the sequence is MKPRAECCSPKFWLVLAVLAVSGSRA. At 27–557 the chain is on the extracellular side; it reads RSQKSPPSIG…SAFLEPFSAD (531 aa). A glycan (N-linked (GlcNAc...) asparagine) is linked at Asn74. The cysteines at positions 86 and 321 are disulfide-linked. Zn(2+)-binding residues include His127 and Glu284. Asn341, Asn348, Asn444, and Asn491 each carry an N-linked (GlcNAc...) asparagine glycan. 2 disulfides stabilise this stretch: Cys429-Cys456 and Cys436-Cys457. 2 residues coordinate L-glutamate: Thr514 and Arg519. N-linked (GlcNAc...) asparagine glycosylation is present at Asn542. A helical membrane pass occupies residues 558–576; it reads VWVMMFVMLLIVSAVAVFV. Residues 577-603 are Cytoplasmic-facing; that stretch reads FEYFSPVGYNRCLADGREPGGPSFTIG. An intramembrane region (discontinuously helical) is located at residues 604–623; sequence KAIWLLWGLVFNNSVPVQNP. Residues 604 to 623 form a pore-forming region; sequence KAIWLLWGLVFNNSVPVQNP. The Cytoplasmic portion of the chain corresponds to 624 to 630; it reads KGTTSKI. A helical transmembrane segment spans residues 631 to 646; sequence MVSVWAFFAVIFLASY. At 647–817 the chain is on the extracellular side; it reads TANLAAFMIQ…VMSSQLDIDN (171 aa). Asn688 carries N-linked (GlcNAc...) asparagine glycosylation. L-glutamate-binding positions include 690–691 and Asp732; that span reads ST. Cysteines 746 and 801 form a disulfide. A helical membrane pass occupies residues 818-837; sequence MAGVFYMLGAAMALSLITFI. The Cytoplasmic segment spans residues 838–1485; it reads CEHLFYWQFR…EKLSSIESDV (648 aa). Ser882, Ser886, Ser917, and Ser920 each carry phosphoserine. Residues Tyr962 and Tyr1039 each carry the phosphotyrosine modification. Ser1058, Ser1061, and Ser1064 each carry phosphoserine. The disordered stretch occupies residues 1074 to 1097; the sequence is EGNAAKRRKQQYKDSLKKRPASAK. Tyr1109 and Tyr1133 each carry phosphotyrosine. Ser1143 bears the Phosphoserine mark. At Tyr1155 the chain carries Phosphotyrosine. Residues 1162 to 1194 form a disordered region; the sequence is FKRDSVSGGGPCTNRSHLKHGAGDKHGVVSGVP. Phosphoserine is present on residues Ser1255 and Ser1259. Over residues 1269 to 1278 the composition is skewed to low complexity; it reads PVAVPSNAPS. Residues 1269 to 1302 are disordered; that stretch reads PVAVPSNAPSTKYPQSPTNSKAQKKTRNKLRRQH. Over residues 1280–1289 the composition is skewed to polar residues; it reads KYPQSPTNSK. The span at 1290–1301 shows a compositional bias: basic residues; that stretch reads AQKKTRNKLRRQ. Residues 1292 to 1304 are interaction with DAPK1; the sequence is KKTRNKLRRQHSY. Ser1303 carries the post-translational modification Phosphoserine; by DAPK1. A Phosphotyrosine modification is found at Tyr1475. Positions 1483 to 1485 match the PDZ-binding motif; sequence SDV.

The protein belongs to the glutamate-gated ion channel (TC 1.A.10.1) family. NR2B/GRIN2B subfamily. As to quaternary structure, heterotetramer. Forms heterotetrameric channels composed of two GluN1/zeta subunits (GRIN1), and two identical GluN2/epsilon subunits (GRIN2A, GRIN2B, GRIN2C or GRIN2D) or GluN3 subunits (GRIN3A or GRIN3B) (in vitro). Can also form heterotetrameric channels that contain at least two GluN1 subunits and at least two different GluN2 subunits (or a combination of one GluN2 and one GluN3 subunits) (in vitro). In vivo, the subunit composition may depend on the expression levels of the different subunits. Found in a complex with GRIN1, GRIN3A and PPP2CB. Found in a complex with GRIN1 and GRIN3B. Interacts with MAGI3. Interacts with HIP1 and Neto1. Interacts with PDZ domains of PATJ, DLG3 and DLG4. Interacts with DAPK1. Found in a complex with GRIN1 and PRR7. Interacts with PRR7. Interacts with CAMK2A. Interacts with ARC; preventing ARC oligomerization. Interacts with TMEM25. Interacts (via the extreme C-terminus) with FRMPD2 (via the second PDZ domain); the interaction is direct and is likely to promote NMDAR-mediated neural signal transmission. Interacts with FAM81A; the interaction facilitates condensate formation via liquid-liquid phase separation. Phosphorylated on tyrosine residues. Phosphorylation at Ser-1303 by DAPK1 enhances synaptic NMDA receptor channel activity.

The protein localises to the cell membrane. It localises to the postsynaptic cell membrane. The protein resides in the cell projection. Its subcellular location is the dendrite. It is found in the late endosome. The protein localises to the lysosome. It localises to the cytoplasm. The protein resides in the cytoskeleton. The catalysed reaction is Ca(2+)(in) = Ca(2+)(out). It catalyses the reaction Na(+)(in) = Na(+)(out). The enzyme catalyses K(+)(in) = K(+)(out). Its function is as follows. Component of N-methyl-D-aspartate (NMDA) receptors (NMDARs) that function as heterotetrameric, ligand-gated cation channels with high calcium permeability and voltage-dependent block by Mg(2+). Participates in synaptic plasticity for learning and memory formation by contributing to the long-term depression (LTD) of hippocampus membrane currents. Channel activation requires binding of the neurotransmitter L-glutamate to the GluN2 subunit, glycine or D-serine binding to the GluN1 subunit, plus membrane depolarization to eliminate channel inhibition by Mg(2+). NMDARs mediate simultaneously the potasium efflux and the influx of calcium and sodium. Each GluN2 subunit confers differential attributes to channel properties, including activation, deactivation and desensitization kinetics, pH sensitivity, Ca2(+) permeability, and binding to allosteric modulators. In concert with DAPK1 at extrasynaptic sites, acts as a central mediator for stroke damage. Its phosphorylation at Ser-1303 by DAPK1 enhances synaptic NMDA receptor channel activity inducing injurious Ca2+ influx through them, resulting in an irreversible neuronal death. This is Glutamate receptor ionotropic, NMDA 2B from Canis lupus familiaris (Dog).